The chain runs to 232 residues: Large ribosomal subunit protein uL1 (232 aa).

The protein belongs to the universal ribosomal protein uL1 family. In terms of assembly, part of the 50S ribosomal subunit.

In terms of biological role, binds directly to 23S rRNA. The L1 stalk is quite mobile in the ribosome, and is involved in E site tRNA release. Its function is as follows. Protein L1 is also a translational repressor protein, it controls the translation of the L11 operon by binding to its mRNA. This Xanthomonas oryzae pv. oryzae (strain KACC10331 / KXO85) protein is Large ribosomal subunit protein uL1.